A 621-amino-acid polypeptide reads, in one-letter code: Bifunctional 3'-phosphoadenosine 5'-phosphosulfate synthase 2 (621 aa).

Residues 1 to 216 form an adenylyl-sulfate kinase region; that stretch reads MSANFKMNHK…VVELLQEQNI (216 aa). Residue 53–58 coordinates ATP; the sequence is GAGKTT. Adenosine 5'-phosphosulfate is bound by residues 80 to 83, phenylalanine 92, 97 to 100, 123 to 124, lysine 162, and 175 to 176; these read DNVR, REEN, IS, and GF. ATP-binding positions include serine 198, 415 to 418, 517 to 521, and alanine 559; these read QLRN and GRDPA. The interval 225–621 is sulfate adenylyltransferase; that stretch reads IHELFVPENK…DYYRSLEKTN (397 aa).

This sequence in the N-terminal section; belongs to the APS kinase family. The protein in the C-terminal section; belongs to the sulfate adenylyltransferase family. As to expression, expressed in liver, cartilage, skin and brain.

It carries out the reaction sulfate + ATP + H(+) = adenosine 5'-phosphosulfate + diphosphate. The enzyme catalyses adenosine 5'-phosphosulfate + ATP = 3'-phosphoadenylyl sulfate + ADP + H(+). Its pathway is sulfur metabolism; sulfate assimilation. In terms of biological role, bifunctional enzyme with both ATP sulfurylase and APS kinase activity, which mediates two steps in the sulfate activation pathway. The first step is the transfer of a sulfate group to ATP to yield adenosine 5'-phosphosulfate (APS), and the second step is the transfer of a phosphate group from ATP to APS yielding 3'-phosphoadenylylsulfate/PAPS, the activated sulfate donor used by sulfotransferases. In mammals, PAPS is the sole source of sulfate while APS appears to only be an intermediate in the sulfate-activation pathway. May have an important role in skeletogenesis during postnatal growth. In Mus musculus (Mouse), this protein is Bifunctional 3'-phosphoadenosine 5'-phosphosulfate synthase 2 (Papss2).